The following is a 208-amino-acid chain: Ribosome maturation factor RimP (208 aa).

The interval 175 to 208 is disordered; sequence GEDVEDLVADPGADDELDELDELDELDDGDEDEQ. The segment covering 177–208 has biased composition (acidic residues); the sequence is DVEDLVADPGADDELDELDELDELDDGDEDEQ.

This sequence belongs to the RimP family.

The protein localises to the cytoplasm. In terms of biological role, required for maturation of 30S ribosomal subunits. This Kineococcus radiotolerans (strain ATCC BAA-149 / DSM 14245 / SRS30216) protein is Ribosome maturation factor RimP.